Here is a 175-residue protein sequence, read N- to C-terminus: Alpha-crystallin B chain (175 aa).

M1 is modified (N-acetylmethionine). S19, S45, and S59 each carry phosphoserine. The sHSP domain maps to 56 to 164 (RAPSWIDTGL…PERTIPITRE (109 aa)). Residue H83 participates in Zn(2+) binding. Position 92 is an N6-acetyllysine (K92). Zn(2+) is bound by residues H104, E106, H111, and H119. Residues 145–175 (VNGPRKQVSGPERTIPITREEKPAVAAAPKK) are disordered. The residue at position 166 (K166) is an N6-acetyllysine.

This sequence belongs to the small heat shock protein (HSP20) family. As to quaternary structure, heteromer composed of three CRYAA and one CRYAB subunits. Aggregates with homologous proteins, including the small heat shock protein HSPB1, to form large heteromeric complexes. Inter-subunit bridging via zinc ions enhances stability, which is crucial as there is no protein turn over in the lens. Interacts with HSPBAP1. Interacts with TTN/titin. Interacts with TMEM109; in the cellular response to DNA damage. Interacts with DES; binds rapidly during early stages of DES filament assembly and a reduced binding seen in the later stages. Interacts with TMED10; the interaction mediates the translocation from the cytoplasm into the ERGIC (endoplasmic reticulum-Golgi intermediate compartment) and thereby secretion. Interacts with ATP6V1A and with MTOR, forming a ternary complex. Abundantly expressed in the lens of the eye. Expressed in ventricular cardiomyocytes of the heart. Also expressed in skeletal muscle and the kidney.

Its subcellular location is the cytoplasm. It localises to the cytosol. It is found in the nucleus. The protein localises to the secreted. The protein resides in the lysosome. Functionally, may contribute to the transparency and refractive index of the lens. Has chaperone-like activity, preventing aggregation of various proteins under a wide range of stress conditions. In lens epithelial cells, stabilizes the ATP6V1A protein, preventing its degradation by the proteasome. The protein is Alpha-crystallin B chain of Mus musculus (Mouse).